A 169-amino-acid polypeptide reads, in one-letter code: Protein MGF 110-12L (169 aa).

Transmembrane regions (helical) follow at residues 2 to 20, 121 to 141, and 148 to 168; these read KVFL…LTYQ, QCCF…FAIC, and TTIK…PILN.

The protein belongs to the asfivirus MGF 110 family.

The protein localises to the host membrane. Its function is as follows. Plays a role in virus cell tropism, and may be required for efficient virus replication in macrophages. This African swine fever virus (isolate Pig/Kenya/KEN-50/1950) (ASFV) protein is Protein MGF 110-12L.